The sequence spans 429 residues: Enolase (429 aa).

Residue glutamine 166 participates in (2R)-2-phosphoglycerate binding. Glutamate 208 serves as the catalytic Proton donor. Mg(2+)-binding residues include aspartate 245, glutamate 289, and aspartate 316. (2R)-2-phosphoglycerate is bound by residues lysine 341, arginine 370, serine 371, and lysine 392. Lysine 341 (proton acceptor) is an active-site residue.

The protein belongs to the enolase family. In terms of assembly, component of the RNA degradosome, a multiprotein complex involved in RNA processing and mRNA degradation. Mg(2+) serves as cofactor.

Its subcellular location is the cytoplasm. It localises to the secreted. The protein localises to the cell surface. The enzyme catalyses (2R)-2-phosphoglycerate = phosphoenolpyruvate + H2O. The protein operates within carbohydrate degradation; glycolysis; pyruvate from D-glyceraldehyde 3-phosphate: step 4/5. Its function is as follows. Catalyzes the reversible conversion of 2-phosphoglycerate (2-PG) into phosphoenolpyruvate (PEP). It is essential for the degradation of carbohydrates via glycolysis. The chain is Enolase from Acinetobacter baumannii (strain AB307-0294).